The sequence spans 885 residues: MQTAEIHRRWLDFFARRGHTVVPSASLVSDDPSLLFTVAGMVPFVPYLTGIVPAPFPRATSVQKCIRTLDIEEVGKTPRHGTFFQMCGNFSFGDYFKEQAIAFAWDLLTTAETEGGLGFDPKDLWVTVYEEDDEAREIWRRVSGLAEERIQGLGKDTNYWSTGQPGPAGPCSEIFFDRGPAYGIDGGPATDDDRYVEIWNLVFMQFLRGEGTGKDDFEILGDLPKKNIDTGLGLERVAFLKQGVENMYEIDQVRPVLDRAAELAGKPYGNEAHEDDVRLRVVADHVRSALMLMTDGVTPSNEGRGYVLRRLLRRTVRAMWLLGVEAATFPALFPVSRDAMKAAYPEVETEFARTSQLAYAEEETFLRTLVAGTSILDTAVANTQKAGKRELAGDTAFLLHDTYGFPIDLTLEMAEEAGLSVDRAAFDTLMADQRARAKADAKAKKTALADLSVYSGLRALGETVFTGYTELETESSVLGLIIDGHSANKAVEGQVAEVILGATALYAEAGGQDADTGTIVGPGYVLDVLDVQKPVRGLVSHRVLVRSGEVGVGVPATSLVDADYRRGAKQAHSGTHIIHAALRQVLGSNAHQSGSYNKAGYLRLDFSWNQALSPETRSEIEEISNSAIRQNLEVTTRELPLAEAKALGAMALFGEKYGDTVRVVDIGGPWSRELCAGTHVARSAEIGLINLVSESSVGSTNRRVESLVGLEAFKDLAVERTIVSQLSSSLKTPREQLPEKIADLMASLKAAEKRIQAFEARAVLDRVQGLLEAVSRRGAVQVVAADAGTLSTADDLRLLAITVRDRLGSDPATVALAALAGGKPVVIVATNQAARDAGVTAGALAKTAAGVLGGGGGGKADLAQGGGTDATAIPAALAAVSTAIG.

4 residues coordinate Zn(2+): H572, H576, C675, and H679.

Belongs to the class-II aminoacyl-tRNA synthetase family. It depends on Zn(2+) as a cofactor.

It localises to the cytoplasm. The catalysed reaction is tRNA(Ala) + L-alanine + ATP = L-alanyl-tRNA(Ala) + AMP + diphosphate. Its function is as follows. Catalyzes the attachment of alanine to tRNA(Ala) in a two-step reaction: alanine is first activated by ATP to form Ala-AMP and then transferred to the acceptor end of tRNA(Ala). Also edits incorrectly charged Ser-tRNA(Ala) and Gly-tRNA(Ala) via its editing domain. This chain is Alanine--tRNA ligase, found in Leifsonia xyli subsp. xyli (strain CTCB07).